Here is a 317-residue protein sequence, read N- to C-terminus: MSFGDFSKICQRTPLPLCSVVKSAKQMVLTNDTTIKNSRLDIIDLGIIPVCYARSIDVANTMIFEIGNAFINIVAFFLLIIIIYNVRRKVTAIGRSEYSYFFQTCLVLIIFTLIVDCGVSAPGSSAYPYLVSVQLGLAGACCWMLSVLGLLGFRLWEDGTFKSMLLLYGMSFGGFILNFVVSIVTFKEWIQRKSDMSTDTMGLFTVMYVINALALLIYIICLLIVSVKVLQNYWATGAILLGVFFFVAGQVLIYAFSNNICEGMNHYLDGMFFGSLCNLFAIMMLYKNWDMSTDDDLEFSVSIDSTEYSTFNSDIKL.

The next 7 helical transmembrane spans lie at 63–83 (IFEI…IIII), 101–121 (FFQT…GVSA), 133–153 (VQLG…LLGF), 164–184 (MLLL…VSIV), 204–224 (FTVM…CLLI), 236–256 (TGAI…IYAF), and 266–286 (HYLD…MMLY).

Belongs to the CHS7 family. In terms of assembly, interacts with CHS3.

It is found in the endoplasmic reticulum membrane. In terms of biological role, chaperone required for the export of the chitin synthase CHS3 from the endoplasmic reticulum. This Kluyveromyces lactis (strain ATCC 8585 / CBS 2359 / DSM 70799 / NBRC 1267 / NRRL Y-1140 / WM37) (Yeast) protein is Chitin synthase export chaperone (CHS7).